The primary structure comprises 338 residues: MEKQTVAVLGPGSWGTALSQVLNDNGHEVRIWGNLPEQINEINTHHTNKHYFKDVVLDENIIAYTDLAETLKDVDAILFVVPTKVTRLVAQQVAQTLDHKVIIMHASKGLEPDSHKRLSTILEEEIPEHLRSDIVVVSGPSHAXETIVRDLTLITAASKDLQTAQYVQELFSNHYFRLYTNTDVIGVETAGALKNIIAVGAGALHGLGFGDNAKAAIIARGLAEITRLGVALGANPLTYSGLSGVGDLIVTGTSIHSRNWRAGDALGRGESLADIEANMGMVIEGISTTRAAYELAQELGVYMPITQAIYQVIYHGTNIKDAIYDIMNNEFKAENEWS.

NADPH contacts are provided by serine 13, tryptophan 14, and lysine 108. Sn-glycerol 3-phosphate is bound by residues lysine 108, glycine 139, and serine 141. Alanine 143 contributes to the NADPH binding site. Residues lysine 194, aspartate 247, serine 257, arginine 258, and asparagine 259 each coordinate sn-glycerol 3-phosphate. The active-site Proton acceptor is lysine 194. Arginine 258 serves as a coordination point for NADPH. The NADPH site is built by valine 282 and glutamate 284.

It belongs to the NAD-dependent glycerol-3-phosphate dehydrogenase family.

It is found in the cytoplasm. The enzyme catalyses sn-glycerol 3-phosphate + NAD(+) = dihydroxyacetone phosphate + NADH + H(+). It catalyses the reaction sn-glycerol 3-phosphate + NADP(+) = dihydroxyacetone phosphate + NADPH + H(+). Its pathway is membrane lipid metabolism; glycerophospholipid metabolism. In terms of biological role, catalyzes the reduction of the glycolytic intermediate dihydroxyacetone phosphate (DHAP) to sn-glycerol 3-phosphate (G3P), the key precursor for phospholipid synthesis. This chain is Glycerol-3-phosphate dehydrogenase [NAD(P)+], found in Streptococcus pneumoniae serotype 19F (strain G54).